The sequence spans 232 residues: Large ribosomal subunit protein uL1 (232 aa).

The protein belongs to the universal ribosomal protein uL1 family. In terms of assembly, part of the 50S ribosomal subunit.

In terms of biological role, binds directly to 23S rRNA. The L1 stalk is quite mobile in the ribosome, and is involved in E site tRNA release. Functionally, protein L1 is also a translational repressor protein, it controls the translation of the L11 operon by binding to its mRNA. This chain is Large ribosomal subunit protein uL1, found in Xanthomonas campestris pv. campestris (strain B100).